A 940-amino-acid chain; its full sequence is Translation initiation factor IF-2 (940 aa).

4 disordered regions span residues P116–T137, E151–S196, A210–V294, and H318–R346. The segment covering L121–T137 has biased composition (polar residues). Residues P159–E180 show a composition bias toward acidic residues. Residues P181–E193 are compositionally biased toward low complexity. A compositionally biased stretch (basic and acidic residues) spans K213–A239. Basic residues predominate over residues K282 to V294. Residues G326–S337 are compositionally biased toward low complexity. Residues A441–S610 enclose the tr-type G domain. The G1 stretch occupies residues G450 to T457. A GTP-binding site is contributed by G450–T457. The G2 stretch occupies residues G475 to H479. Residues D496 to G499 form a G3 region. GTP contacts are provided by residues D496–H500 and N550–D553. Residues N550–D553 form a G4 region. Residues S586 to Q588 form a G5 region.

It belongs to the TRAFAC class translation factor GTPase superfamily. Classic translation factor GTPase family. IF-2 subfamily.

It is found in the cytoplasm. Functionally, one of the essential components for the initiation of protein synthesis. Protects formylmethionyl-tRNA from spontaneous hydrolysis and promotes its binding to the 30S ribosomal subunits. Also involved in the hydrolysis of GTP during the formation of the 70S ribosomal complex. This is Translation initiation factor IF-2 from Teredinibacter turnerae (strain ATCC 39867 / T7901).